Consider the following 221-residue polypeptide: uncharacterized protein (221 aa).

2 stretches are compositionally biased toward low complexity: residues 1–27 and 140–162; these read MNNNNNNNNNNNNNNNNNNNNNNNNNN and TTTSSTTTTTTTTSTTTTNNSSS. Disordered regions lie at residues 1 to 28 and 140 to 205; these read MNNNNNNNNNNNNNNNNNNNNNNNNNNE and TTTS…NIGG.

This is an uncharacterized protein from Dictyostelium discoideum (Social amoeba).